A 124-amino-acid chain; its full sequence is Small ribosomal subunit protein uS11 (124 aa).

The protein belongs to the universal ribosomal protein uS11 family. As to quaternary structure, part of the 30S ribosomal subunit. Interacts with proteins S7 and S18. Binds to IF-3.

Its function is as follows. Located on the platform of the 30S subunit, it bridges several disparate RNA helices of the 16S rRNA. Forms part of the Shine-Dalgarno cleft in the 70S ribosome. The chain is Small ribosomal subunit protein uS11 from Anaplasma phagocytophilum (strain HZ).